We begin with the raw amino-acid sequence, 344 residues long: GDSL esterase/lipase At2g19010 (344 aa).

A signal peptide spans 1–21 (MSKACWLVAAIIFTAATVVYG). The Nucleophile role is filled by serine 33. Asparagine 303 carries an N-linked (GlcNAc...) asparagine glycan. Residues aspartate 311 and histidine 314 contribute to the active site.

This sequence belongs to the 'GDSL' lipolytic enzyme family.

The protein localises to the secreted. This is GDSL esterase/lipase At2g19010 from Arabidopsis thaliana (Mouse-ear cress).